We begin with the raw amino-acid sequence, 236 residues long: Phosphoribosylaminoimidazole-succinocarboxamide synthase (236 aa).

Belongs to the SAICAR synthetase family.

It carries out the reaction 5-amino-1-(5-phospho-D-ribosyl)imidazole-4-carboxylate + L-aspartate + ATP = (2S)-2-[5-amino-1-(5-phospho-beta-D-ribosyl)imidazole-4-carboxamido]succinate + ADP + phosphate + 2 H(+). It functions in the pathway purine metabolism; IMP biosynthesis via de novo pathway; 5-amino-1-(5-phospho-D-ribosyl)imidazole-4-carboxamide from 5-amino-1-(5-phospho-D-ribosyl)imidazole-4-carboxylate: step 1/2. The sequence is that of Phosphoribosylaminoimidazole-succinocarboxamide synthase from Pseudomonas savastanoi pv. phaseolicola (strain 1448A / Race 6) (Pseudomonas syringae pv. phaseolicola (strain 1448A / Race 6)).